Reading from the N-terminus, the 340-residue chain is Protein-tyrosine-phosphatase PTP1 (340 aa).

The Tyrosine-protein phosphatase domain maps to Ile58–Glu326. Residues Asp234, Cys265–Arg271, and Gln311 each bind substrate. Cys265 (phosphocysteine intermediate) is an active-site residue.

In terms of assembly, interacts with MPK6. Interacts with KIN10. Phosphorylated by KIN10. As to expression, expressed in roots, stems and flowers, and at low levels in leaves.

It localises to the cytoplasm. The protein localises to the cytosol. The protein resides in the nucleus. It carries out the reaction O-phospho-L-tyrosyl-[protein] + H2O = L-tyrosyl-[protein] + phosphate. With respect to regulation, inhibited by hydrogen peroxide. Its function is as follows. Protein-tyrosine-phosphatase that dephosphorylates and probably inhibits MPK6 in non-oxidative stress conditions. In association with MKP1, represses salicylic acid (SA) and camalexin biosynthesis, thus modulating defense response. May also repress MPK3. Dephosphorylates and inactivates MPK4 in vitro. The sequence is that of Protein-tyrosine-phosphatase PTP1 (PTP1) from Arabidopsis thaliana (Mouse-ear cress).